A 62-amino-acid polypeptide reads, in one-letter code: MKAAELRKLSIDELKDKLAETRKELFDLRFKHATAQLEKTAEIPAAKHNVARILTILKEKGA.

The protein belongs to the universal ribosomal protein uL29 family.

This Oleidesulfovibrio alaskensis (strain ATCC BAA-1058 / DSM 17464 / G20) (Desulfovibrio alaskensis) protein is Large ribosomal subunit protein uL29.